Here is a 116-residue protein sequence, read N- to C-terminus: NADH-ubiquinone oxidoreductase chain 3 (116 aa).

3 consecutive transmembrane segments (helical) span residues 8–28 (VVAT…LPSL), 56–76 (FFLI…LLPL), and 88–108 (TLLW…YEWF).

The protein belongs to the complex I subunit 3 family.

The protein resides in the mitochondrion membrane. It catalyses the reaction a ubiquinone + NADH + 5 H(+)(in) = a ubiquinol + NAD(+) + 4 H(+)(out). Its function is as follows. Core subunit of the mitochondrial membrane respiratory chain NADH dehydrogenase (Complex I) that is believed to belong to the minimal assembly required for catalysis. Complex I functions in the transfer of electrons from NADH to the respiratory chain. The immediate electron acceptor for the enzyme is believed to be ubiquinone. The sequence is that of NADH-ubiquinone oxidoreductase chain 3 (MT-ND3) from Scyliorhinus canicula (Small-spotted catshark).